Consider the following 361-residue polypeptide: Transcription factor TCP10 (361 aa).

The TCP domain occupies 29-87; the sequence is RKDRHSKVFTSKGPRDRRVRLSAHTAIQFYDVQDRLGYDRPSKAVDWLIKKAKTAIDKL. Disordered regions lie at residues 220 to 259 and 295 to 317; these read DLTM…QPSM and SWDH…SMFA. The segment covering 295 to 304 has biased composition (basic and acidic residues); it reads SWDHHQTTSD.

As to quaternary structure, interacts with AHP1, AHP2 and AHP3. Interacts with SPL. Mostly detected in lateral organs, such as leaves and flowers. Expressed in cotyledons, particularly in the vascular region, in leaves, roots, stems, buds, flowers and immature siliques.

Its subcellular location is the nucleus. Functionally, plays a pivotal role in the control of morphogenesis of shoot organs by negatively regulating the expression of boundary-specific genes such as CUC genes, probably through the induction of miRNA (e.g. miR164). Participates in ovule development. This Arabidopsis thaliana (Mouse-ear cress) protein is Transcription factor TCP10 (TCP10).